Here is a 783-residue protein sequence, read N- to C-terminus: Rabenosyn-5 (783 aa).

Position 2 is an N-acetylalanine (Ala2). A Phosphoserine modification is found at Ser3. The C2H2-type zinc finger occupies 14–37 (FLCPLCLKDLQSFYQLQSHYEEEH). The necessary for the correct targeting to endosomes stretch occupies residues 99-262 (RSHLSDFKKH…HCKDKLLKRE (164 aa)). The segment at 156 to 259 (DQDVPFCPDC…CCTHCKDKLL (104 aa)) adopts an FYVE-type zinc-finger fold. Zn(2+) contacts are provided by Cys162, Cys165, Cys178, Cys181, Cys186, and Cys189. The span at 206–223 (KDSLSTHTSPSQSPNSVH) shows a compositional bias: polar residues. The disordered stretch occupies residues 206-240 (KDSLSTHTSPSQSPNSVHGSRRGSISSMSSVSSVL). Ser214, Ser218, Ser225, and Ser229 each carry phosphoserine. Residues 227-239 (RGSISSMSSVSSV) are compositionally biased toward low complexity. Zn(2+) contacts are provided by Cys251 and Cys254. The segment at 263–499 (QQMDEKEHTP…QLQDEYDQQQ (237 aa)) is necessary for interaction with RAB4A. A necessary for interaction with EHD1 region spans residues 263-783 (QQMDEKEHTP…TLAKQKGAPN (521 aa)). 2 coiled-coil regions span residues 377–412 (TKEQ…KLEE) and 471–531 (QAKA…ELER). 2 stretches are compositionally biased toward basic and acidic residues: residues 387 to 399 (KRKQ…RTVE) and 405 to 414 (ESRRKLEERQ). The tract at residues 387–433 (KRKQDLEQKRTVERQAALESRRKLEERQSGLASHTANGDVRSLRGIP) is disordered. The region spanning 495–514 (YDQQQTEKAIELSRKQAEEE) is the UIM domain. 2 disordered regions span residues 569-638 (SYSL…SPTE) and 663-733 (FEED…EEHI). Composition is skewed to polar residues over residues 571–584 (SLDQ…SSTA) and 610–623 (TLPQ…SDKA). Residues 627 to 783 (PFDEDDLSSP…TLAKQKGAPN (157 aa)) are necessary for interaction with RAB5A. The segment covering 663–673 (FEEDAEEEEVA) has biased composition (acidic residues). Ser686 carries the phosphoserine modification. The segment covering 721-733 (VDSDSGMEAEEHI) has biased composition (acidic residues).

In terms of assembly, interacts with EHD1, RAB4A, RAB5A, RAB22A, RAB24 and VPS45. Binds simultaneously to RAB4A and RAB5A in vitro. Interacts with RAB4A and RAB5A that has been activated by GTP binding.

It localises to the cell membrane. It is found in the early endosome membrane. Rab4/Rab5 effector protein acting in early endocytic membrane fusion and membrane trafficking of recycling endosomes. Required for endosome fusion either homotypically or with clathrin coated vesicles. Plays a role in the lysosomal trafficking of CTSD/cathepsin D from the Golgi to lysosomes. Also promotes the recycling of transferrin directly from early endosomes to the plasma membrane. Binds phospholipid vesicles containing phosphatidylinositol 3-phosphate (PtdInsP3). Plays a role in the recycling of transferrin receptor to the plasma membrane. This chain is Rabenosyn-5, found in Mus musculus (Mouse).